Consider the following 242-residue polypeptide: Octanoyltransferase (242 aa).

A BPL/LPL catalytic domain is found at 31–206 (SQTTDEIWFL…LFLKNFGYNQ (176 aa)). Substrate contacts are provided by residues 70–77 (RGGQVTYH), 137–139 (SIG), and 150–152 (GLA). Cysteine 168 (acyl-thioester intermediate) is an active-site residue.

This sequence belongs to the LipB family.

The protein resides in the cytoplasm. It carries out the reaction octanoyl-[ACP] + L-lysyl-[protein] = N(6)-octanoyl-L-lysyl-[protein] + holo-[ACP] + H(+). Its pathway is protein modification; protein lipoylation via endogenous pathway; protein N(6)-(lipoyl)lysine from octanoyl-[acyl-carrier-protein]: step 1/2. Functionally, catalyzes the transfer of endogenously produced octanoic acid from octanoyl-acyl-carrier-protein onto the lipoyl domains of lipoate-dependent enzymes. Lipoyl-ACP can also act as a substrate although octanoyl-ACP is likely to be the physiological substrate. This Coxiella burnetii (strain CbuG_Q212) (Coxiella burnetii (strain Q212)) protein is Octanoyltransferase.